The primary structure comprises 279 residues: Shikimate dehydrogenase (NADP(+)) (279 aa).

Shikimate contacts are provided by residues 17-19 and Thr64; that span reads SQS. The active-site Proton acceptor is the Lys68. Shikimate-binding residues include Asn89 and Asp105. NADP(+) contacts are provided by residues 130 to 134 and Leu218; that span reads GAGGA. Position 220 (Tyr220) interacts with shikimate. Gly242 serves as a coordination point for NADP(+).

The protein belongs to the shikimate dehydrogenase family. In terms of assembly, homodimer.

It carries out the reaction shikimate + NADP(+) = 3-dehydroshikimate + NADPH + H(+). It functions in the pathway metabolic intermediate biosynthesis; chorismate biosynthesis; chorismate from D-erythrose 4-phosphate and phosphoenolpyruvate: step 4/7. Involved in the biosynthesis of the chorismate, which leads to the biosynthesis of aromatic amino acids. Catalyzes the reversible NADPH linked reduction of 3-dehydroshikimate (DHSA) to yield shikimate (SA). The sequence is that of Shikimate dehydrogenase (NADP(+)) from Methylococcus capsulatus (strain ATCC 33009 / NCIMB 11132 / Bath).